A 305-amino-acid polypeptide reads, in one-letter code: Probable branched-chain-amino-acid aminotransferase (305 aa).

The residue at position 156 (lysine 156) is an N6-(pyridoxal phosphate)lysine.

Belongs to the class-IV pyridoxal-phosphate-dependent aminotransferase family. Requires pyridoxal 5'-phosphate as cofactor.

It catalyses the reaction L-leucine + 2-oxoglutarate = 4-methyl-2-oxopentanoate + L-glutamate. The catalysed reaction is L-isoleucine + 2-oxoglutarate = (S)-3-methyl-2-oxopentanoate + L-glutamate. It carries out the reaction L-valine + 2-oxoglutarate = 3-methyl-2-oxobutanoate + L-glutamate. The protein operates within amino-acid biosynthesis; L-isoleucine biosynthesis; L-isoleucine from 2-oxobutanoate: step 4/4. It functions in the pathway amino-acid biosynthesis; L-leucine biosynthesis; L-leucine from 3-methyl-2-oxobutanoate: step 4/4. Its pathway is amino-acid biosynthesis; L-valine biosynthesis; L-valine from pyruvate: step 4/4. Its function is as follows. Acts on leucine, isoleucine and valine. This Synechocystis sp. (strain ATCC 27184 / PCC 6803 / Kazusa) protein is Probable branched-chain-amino-acid aminotransferase (ilvE).